A 342-amino-acid polypeptide reads, in one-letter code: Leucine-rich repeat-containing protein 23 (342 aa).

A compositionally biased stretch (acidic residues) spans 1 to 30 (MSDEDDLEDFETDQDDLEREDDEKETEEWE). Residues 1-42 (MSDEDDLEDFETDQDDLEREDDEKETEEWEDYRKEGEESEDW) form a disordered region. Residues 3 to 27 (DEDDLEDFETDQDDLEREDDEKETE) adopt a coiled-coil conformation. 8 LRR repeats span residues 91–112 (HLRY…NHLT), 113–133 (NLLW…NELP), 134–154 (YLQI…ISHP), 155–176 (RLAS…DPQK), 179–199 (SLHT…INLP), 200–221 (KLKN…ENLS), 222–243 (NLTT…SKEM), and 245–266 (SLQY…AKLR). Residues 207–342 (AQNMLKKVEG…PESELDQSST (136 aa)) are interaction with RSPH9. In terms of domain architecture, LRRCT spans 279-317 (NPCTDENDYRQEALVQIAHLERLDKEFYEEEERAEADEI). Residues 306-332 (YEEEERAEADEIRQRMKEEQEQEAEVE) are a coiled coil. The segment at 307-342 (EEEERAEADEIRQRMKEEQEQEAEVEPESELDQSST) is disordered. Over residues 314–324 (ADEIRQRMKEE) the composition is skewed to basic and acidic residues. Positions 325–342 (QEQEAEVEPESELDQSST) are enriched in acidic residues.

As to quaternary structure, component of the axonemal radial spoke complex. Interacts with RSPH3. Interacts with RSPH9.

It localises to the cytoplasm. The protein resides in the cytoskeleton. Its subcellular location is the flagellum axoneme. Its function is as follows. Essential for sperm motility and male fertility. Plays an important role in the proper assembly of the third radial spoke (RS3) head and the bridge structure between RS2 and RS3 in the sperm flagella. This is Leucine-rich repeat-containing protein 23 (LRRC23) from Bos taurus (Bovine).